We begin with the raw amino-acid sequence, 137 residues long: Small ribosomal subunit protein uS8 (137 aa).

The protein belongs to the universal ribosomal protein uS8 family. As to quaternary structure, part of the 30S ribosomal subunit. Contacts proteins S5 and S12.

In terms of biological role, one of the primary rRNA binding proteins, it binds directly to 16S rRNA central domain where it helps coordinate assembly of the platform of the 30S subunit. The polypeptide is Small ribosomal subunit protein uS8 (Metamycoplasma arthritidis (strain 158L3-1) (Mycoplasma arthritidis)).